A 995-amino-acid polypeptide reads, in one-letter code: Bifunctional glutamine synthetase adenylyltransferase/adenylyl-removing enzyme (995 aa).

The interval 1–474 (MNHSAPGNAD…HYEKLFEGDD (474 aa)) is adenylyl removase. 2 glnE regions span residues 122 to 333 (RRMK…MKRQ) and 637 to 853 (SYEE…MRRA). Residues 479–995 (AKLPALDYSA…LEGTSPASAR (517 aa)) form an adenylyl transferase region.

Belongs to the GlnE family. It depends on Mg(2+) as a cofactor.

The enzyme catalyses [glutamine synthetase]-O(4)-(5'-adenylyl)-L-tyrosine + phosphate = [glutamine synthetase]-L-tyrosine + ADP. It catalyses the reaction [glutamine synthetase]-L-tyrosine + ATP = [glutamine synthetase]-O(4)-(5'-adenylyl)-L-tyrosine + diphosphate. Functionally, involved in the regulation of glutamine synthetase GlnA, a key enzyme in the process to assimilate ammonia. When cellular nitrogen levels are high, the C-terminal adenylyl transferase (AT) inactivates GlnA by covalent transfer of an adenylyl group from ATP to specific tyrosine residue of GlnA, thus reducing its activity. Conversely, when nitrogen levels are low, the N-terminal adenylyl removase (AR) activates GlnA by removing the adenylyl group by phosphorolysis, increasing its activity. The regulatory region of GlnE binds the signal transduction protein PII (GlnB) which indicates the nitrogen status of the cell. The protein is Bifunctional glutamine synthetase adenylyltransferase/adenylyl-removing enzyme of Bradyrhizobium diazoefficiens (strain JCM 10833 / BCRC 13528 / IAM 13628 / NBRC 14792 / USDA 110).